Reading from the N-terminus, the 718-residue chain is Phenylalanine--tRNA ligase beta subunit (718 aa).

Positions 39 to 153 (LNEISGIKFG…IFDLESNPLK (115 aa)) constitute a tRNA-binding domain. A B5 domain is found at 386-460 (SKKTFLDLNY…RFYGLEKLKD (75 aa)). Positions 438, 444, and 448 each coordinate Mg(2+).

Belongs to the phenylalanyl-tRNA synthetase beta subunit family. Type 1 subfamily. Tetramer of two alpha and two beta subunits. Mg(2+) is required as a cofactor.

The protein resides in the cytoplasm. It catalyses the reaction tRNA(Phe) + L-phenylalanine + ATP = L-phenylalanyl-tRNA(Phe) + AMP + diphosphate + H(+). The sequence is that of Phenylalanine--tRNA ligase beta subunit from Mesomycoplasma hyopneumoniae (strain J / ATCC 25934 / NCTC 10110) (Mycoplasma hyopneumoniae).